A 301-amino-acid chain; its full sequence is MANLRDIRKKIGSVKNTQKITHAMKLVSTSKLRKAEEVARNSRAYALKLDAVFDDVLSKMKNQGIEDIQSKYFRELERLEIKKVDIIFITADKGLCGGFNTNTIKKVLACTNEYKEKDIKVRLRGIGKKGNEYFSFNGIEVLDKINNLSSMPNYERAQEFMKKVVEDYLSGKTDKVIIIHNGFKNMITQEIRVKTILPIGYQIIHQNPQPSEAQETITSEPSGSEDEILDSLAEKYVEYSLYYALIDSLAAEHSARMQAMDTATNNAKDLVKTLTISYNKARQEAITTELVEINAGVEALK.

This sequence belongs to the ATPase gamma chain family. As to quaternary structure, F-type ATPases have 2 components, CF(1) - the catalytic core - and CF(0) - the membrane proton channel. CF(1) has five subunits: alpha(3), beta(3), gamma(1), delta(1), epsilon(1). CF(0) has three main subunits: a, b and c.

The protein resides in the cell inner membrane. Functionally, produces ATP from ADP in the presence of a proton gradient across the membrane. The gamma chain is believed to be important in regulating ATPase activity and the flow of protons through the CF(0) complex. This chain is ATP synthase gamma chain, found in Helicobacter pylori (strain G27).